Here is a 226-residue protein sequence, read N- to C-terminus: PDGF-related-transforming protein sis (226 aa).

Residues 201–215 (RRPPKGKHRKCKHTH) are compositionally biased toward basic residues. The tract at residues 201–226 (RRPPKGKHRKCKHTHDKTALKETLGA) is disordered.

Belongs to the PDGF/VEGF growth factor family.

The protein is PDGF-related-transforming protein sis (V-SIS) of Woolly monkey sarcoma virus (WMSV).